The sequence spans 244 residues: Glutathione S-transferase theta-2B (244 aa).

Residues 2 to 82 (GLELFLDLVS…YLSCKYQTPD (81 aa)) enclose the GST N-terminal domain. Glutathione-binding positions include 40-41 (HK), 53-54 (KL), 66-67 (ES), and 104-107 (DCIR). The GST C-terminal domain occupies 88–224 (DLQARARVHE…SILEQAAKKT (137 aa)).

The protein belongs to the GST superfamily. Theta family. Homodimer. Expressed at low levels in liver. In lung, expressed at low levels in ciliated bronchiolar cells, alveolar macrophages and alveolar type II cells.

Its subcellular location is the cytoplasm. It localises to the cytosol. It catalyses the reaction RX + glutathione = an S-substituted glutathione + a halide anion + H(+). In terms of biological role, conjugation of reduced glutathione to a wide number of exogenous and endogenous hydrophobic electrophiles. Has a sulfatase activity. The sequence is that of Glutathione S-transferase theta-2B (GSTT2B) from Homo sapiens (Human).